We begin with the raw amino-acid sequence, 443 residues long: Glutamate--tRNA ligase 1 (443 aa).

The 'HIGH' region motif lies at 8-18 (PSPTGRLHVGN). The 'KMSKS' region motif lies at 239–243 (KLSKR). Lysine 242 lines the ATP pocket.

It belongs to the class-I aminoacyl-tRNA synthetase family. Glutamate--tRNA ligase type 1 subfamily. As to quaternary structure, monomer.

It localises to the cytoplasm. The enzyme catalyses tRNA(Glu) + L-glutamate + ATP = L-glutamyl-tRNA(Glu) + AMP + diphosphate. In terms of biological role, catalyzes the attachment of glutamate to tRNA(Glu) in a two-step reaction: glutamate is first activated by ATP to form Glu-AMP and then transferred to the acceptor end of tRNA(Glu). This Rhizorhabdus wittichii (strain DSM 6014 / CCUG 31198 / JCM 15750 / NBRC 105917 / EY 4224 / RW1) (Sphingomonas wittichii) protein is Glutamate--tRNA ligase 1.